The primary structure comprises 806 residues: Glycerol-3-phosphate acyltransferase (806 aa).

Positions 305–310 match the HXXXXD motif motif; it reads CHRSHM.

This sequence belongs to the GPAT/DAPAT family.

The protein resides in the cell inner membrane. It catalyses the reaction sn-glycerol 3-phosphate + an acyl-CoA = a 1-acyl-sn-glycero-3-phosphate + CoA. It functions in the pathway phospholipid metabolism; CDP-diacylglycerol biosynthesis; CDP-diacylglycerol from sn-glycerol 3-phosphate: step 1/3. This is Glycerol-3-phosphate acyltransferase from Enterobacter sp. (strain 638).